The chain runs to 160 residues: Phosphopantetheine adenylyltransferase (160 aa).

Residue Ser9 coordinates substrate. Residues 9-10 (SF) and His17 each bind ATP. Positions 41, 73, and 87 each coordinate substrate. ATP contacts are provided by residues 88–90 (GLR), Glu98, and 122–128 (YSFVSSS).

Belongs to the bacterial CoaD family. Homohexamer. Mg(2+) serves as cofactor.

Its subcellular location is the cytoplasm. It carries out the reaction (R)-4'-phosphopantetheine + ATP + H(+) = 3'-dephospho-CoA + diphosphate. It participates in cofactor biosynthesis; coenzyme A biosynthesis; CoA from (R)-pantothenate: step 4/5. Functionally, reversibly transfers an adenylyl group from ATP to 4'-phosphopantetheine, yielding dephospho-CoA (dPCoA) and pyrophosphate. The sequence is that of Phosphopantetheine adenylyltransferase from Mycobacterium leprae (strain TN).